The sequence spans 426 residues: 3-phosphoshikimate 1-carboxyvinyltransferase (426 aa).

3-phosphoshikimate-binding residues include Lys22, Ser23, and Arg27. Position 22 (Lys22) interacts with phosphoenolpyruvate. Gly96 and Arg124 together coordinate phosphoenolpyruvate. Residues Ser170 and Ser171 each coordinate 3-phosphoshikimate. Position 172 (Gln172) interacts with phosphoenolpyruvate. 3-phosphoshikimate is bound by residues Ser198, Asp314, Asn337, and Lys341. The Proton acceptor role is filled by Asp314. The phosphoenolpyruvate site is built by Arg345, Arg387, and Lys412.

This sequence belongs to the EPSP synthase family. Homotetramer.

The protein resides in the cytoplasm. The catalysed reaction is 3-phosphoshikimate + phosphoenolpyruvate = 5-O-(1-carboxyvinyl)-3-phosphoshikimate + phosphate. Its pathway is metabolic intermediate biosynthesis; chorismate biosynthesis; chorismate from D-erythrose 4-phosphate and phosphoenolpyruvate: step 6/7. Functionally, catalyzes the transfer of the enolpyruvyl moiety of phosphoenolpyruvate (PEP) to the 5-hydroxyl of shikimate-3-phosphate (S3P) to produce enolpyruvyl shikimate-3-phosphate and inorganic phosphate. The polypeptide is 3-phosphoshikimate 1-carboxyvinyltransferase (Vibrio cholerae serotype O1 (strain ATCC 39315 / El Tor Inaba N16961)).